A 147-amino-acid polypeptide reads, in one-letter code: Large ribosomal subunit protein uL13 (147 aa).

This sequence belongs to the universal ribosomal protein uL13 family. Part of the 50S ribosomal subunit.

In terms of biological role, this protein is one of the early assembly proteins of the 50S ribosomal subunit, although it is not seen to bind rRNA by itself. It is important during the early stages of 50S assembly. This chain is Large ribosomal subunit protein uL13, found in Arthrobacter sp. (strain FB24).